Reading from the N-terminus, the 467-residue chain is ATP synthase subunit beta (467 aa).

Residue 152–159 (GGAGVGKT) coordinates ATP.

This sequence belongs to the ATPase alpha/beta chains family. F-type ATPases have 2 components, CF(1) - the catalytic core - and CF(0) - the membrane proton channel. CF(1) has five subunits: alpha(3), beta(3), gamma(1), delta(1), epsilon(1). CF(0) has three main subunits: a(1), b(2) and c(9-12). The alpha and beta chains form an alternating ring which encloses part of the gamma chain. CF(1) is attached to CF(0) by a central stalk formed by the gamma and epsilon chains, while a peripheral stalk is formed by the delta and b chains.

It is found in the cell membrane. The catalysed reaction is ATP + H2O + 4 H(+)(in) = ADP + phosphate + 5 H(+)(out). Produces ATP from ADP in the presence of a proton gradient across the membrane. The catalytic sites are hosted primarily by the beta subunits. The polypeptide is ATP synthase subunit beta (Caldicellulosiruptor bescii (strain ATCC BAA-1888 / DSM 6725 / KCTC 15123 / Z-1320) (Anaerocellum thermophilum)).